We begin with the raw amino-acid sequence, 584 residues long: ETHYLENE INSENSITIVE 3-like 1 protein (584 aa).

Positions 41 to 74 form a coiled coil; sequence YTDDEMDVDELEKRMWRDKMRLKRLKEQQSKCKE. Residues 67 to 80 are compositionally biased toward basic and acidic residues; sequence EQQSKCKEGVDGSK. Disordered regions lie at residues 67–93 and 565–584; these read EQQS…RKKM and EGMG…SIWF.

It belongs to the EIN3 family. As to quaternary structure, acts as a homodimer to bind the primary ethylene response element.

The protein resides in the nucleus. In terms of biological role, probable transcription factor acting as a positive regulator in the ethylene response pathway. Could bind the primary ethylene response element present in the ETHYLENE-RESPONSE-FACTOR1 promoter. The polypeptide is ETHYLENE INSENSITIVE 3-like 1 protein (EIL1) (Arabidopsis thaliana (Mouse-ear cress)).